Reading from the N-terminus, the 120-residue chain is Succinate dehydrogenase membrane anchor subunit (120 aa).

At 1 to 17 the chain is on the mitochondrial matrix side; the sequence is MTEKLLHFIRTKSGSMH. The helical transmembrane segment at 18 to 38 threads the bilayer; that stretch reads WWLQRFLAILLAPIILYLLFD. Topologically, residues 39-63 are mitochondrial intermembrane; that stretch reads VAIYIGQQSDPTVMMFLNRIFNHNS. Residues 64–85 traverse the membrane as a helical segment; it reads IFIFITSVILIWHVRGGMEVII. Histidine 76 serves as a coordination point for heme. Residues 86–95 are Mitochondrial matrix-facing; that stretch reads EDYVHGEKTR. Position 88 (tyrosine 88) interacts with a ubiquinone. Residues 96-120 traverse the membrane as a helical segment; that stretch reads IVSIFLIRVIAIEIMEYLYKCSIIF.

As to quaternary structure, part of an enzyme complex containing four subunits: a flavoprotein, an iron-sulfur protein, plus two membrane-anchoring proteins. It depends on heme as a cofactor.

Its subcellular location is the mitochondrion inner membrane. The protein operates within carbohydrate metabolism; tricarboxylic acid cycle. Its function is as follows. Membrane-anchoring subunit of succinate dehydrogenase (SDH). The polypeptide is Succinate dehydrogenase membrane anchor subunit (SDH4) (Reclinomonas americana).